The following is a 414-amino-acid chain: Putative transporter AmpG 4 (414 aa).

12 consecutive transmembrane segments (helical) span residues I15–V35, I44–W63, W84–P104, T109–V129, V150–I170, L177–N197, F230–A250, I268–V288, F295–L315, A324–V344, Y360–G379, and G389–N409.

This sequence belongs to the major facilitator superfamily.

Its subcellular location is the cell inner membrane. The polypeptide is Putative transporter AmpG 4 (ampG4) (Rickettsia felis (strain ATCC VR-1525 / URRWXCal2) (Rickettsia azadi)).